The sequence spans 288 residues: Energy-coupling factor transporter ATP-binding protein EcfA2 (288 aa).

One can recognise an ABC transporter domain in the interval 3-245 (IKIENLTHVY…VDTLESVGLA (243 aa)). 40-47 (GHTGSGKS) is an ATP binding site.

The protein belongs to the ABC transporter superfamily. Energy-coupling factor EcfA family. Forms a stable energy-coupling factor (ECF) transporter complex composed of 2 membrane-embedded substrate-binding proteins (S component), 2 ATP-binding proteins (A component) and 2 transmembrane proteins (T component).

Its subcellular location is the cell membrane. Its function is as follows. ATP-binding (A) component of a common energy-coupling factor (ECF) ABC-transporter complex. Unlike classic ABC transporters this ECF transporter provides the energy necessary to transport a number of different substrates. The protein is Energy-coupling factor transporter ATP-binding protein EcfA2 of Clostridium tetani (strain Massachusetts / E88).